A 140-amino-acid polypeptide reads, in one-letter code: Profilin-2 (140 aa).

Position 2 is an N-acetylalanine (Ala2).

This sequence belongs to the profilin family. As to quaternary structure, occurs in many kinds of cells as a complex with monomeric actin in a 1:1 ratio. Interacts with PFN2. Interacts with ACTMAP (via N-terminus); the interaction may facilitate efficient cleavage of the acetylated N-terminus of immature actin by ACTMAP.

It localises to the cytoplasm. The protein resides in the cytoskeleton. Binds to actin and affects the structure of the cytoskeleton. At high concentrations, profilin prevents the polymerization of actin, whereas it enhances it at low concentrations. By binding to PIP2, it inhibits the formation of IP3 and DG. The protein is Profilin-2 (PFN2) of Bos taurus (Bovine).